The following is a 136-amino-acid chain: MIDEIDKKILDELSKNSRLTMKKLGEKVHLTAPATASRVVKLIDNGIIKGCSIEVNQVKLGFSIHAFLNIYIEKIHHQPYLAFIETQDNYVINNYKVSGDGCYLLECKFPSNEVLDQFLNDLNKHANYKVSIVIGK.

In terms of domain architecture, HTH asnC-type spans 2 to 63; it reads IDEIDKKILD…EVNQVKLGFS (62 aa). Positions 21 to 40 form a DNA-binding region, H-T-H motif; it reads MKKLGEKVHLTAPATASRVV.

Functionally, negative regulation of glyA transcription and kinB-dependent sporulation. The polypeptide is HTH-type transcriptional regulator LrpA (lrpA) (Bacillus subtilis (strain 168)).